Consider the following 631-residue polypeptide: Phosphomethylpyrimidine synthase (631 aa).

Positions Thr-54–Tyr-80 are disordered. Residues Gly-58–Thr-67 show a composition bias toward basic and acidic residues. Residues Asn-239, Met-268, Tyr-297, His-333, Ser-353–Gly-355, Asp-394–Arg-397, and Glu-433 contribute to the substrate site. His-437 is a Zn(2+) binding site. Residue Tyr-460 coordinates substrate. A Zn(2+)-binding site is contributed by His-501. Positions 581, 584, and 589 each coordinate [4Fe-4S] cluster.

It belongs to the ThiC family. Homodimer. [4Fe-4S] cluster serves as cofactor.

The catalysed reaction is 5-amino-1-(5-phospho-beta-D-ribosyl)imidazole + S-adenosyl-L-methionine = 4-amino-2-methyl-5-(phosphooxymethyl)pyrimidine + CO + 5'-deoxyadenosine + formate + L-methionine + 3 H(+). Its pathway is cofactor biosynthesis; thiamine diphosphate biosynthesis. In terms of biological role, catalyzes the synthesis of the hydroxymethylpyrimidine phosphate (HMP-P) moiety of thiamine from aminoimidazole ribotide (AIR) in a radical S-adenosyl-L-methionine (SAM)-dependent reaction. This chain is Phosphomethylpyrimidine synthase, found in Klebsiella pneumoniae subsp. pneumoniae (strain ATCC 700721 / MGH 78578).